The chain runs to 448 residues: MPGLKRILTVTILALWLPHPGNAQQQCTNGFDLDRQTGQCLDIDECRTIPEACRGDMMCVNQNGGYLCIPRTNPVYRGPYSNPYSTSYSGPYPAAAPPVPASNYPTISRPLVCRFGYQMDEGNQCVDVDECATDSHQCNPTQICINTEGGYTCSCTDGYWLLEGQCLDIDECRYGYCQQLCANVPGSYSCTCNPGFTLNDDGRSCQDVNECETENPCVQTCVNTYGSFICRCDPGYELEEDGIHCSDMDECSFSEFLCQHECVNQPGSYFCSCPPGYVLLEDNRSCQDINECEHRNHTCTPLQTCYNLQGGFKCIDPIVCEEPYLLIGDNRCMCPAENTGCRDQPFTILFRDMDVVSGRSVPADIFQMQATTRYPGAYYIFQIKSGNEGREFYMRQTGPISATLVMTRPIKGPRDIQLDLEMITVNTVINFRGSSVIRLRIYVSQYPF.

Positions 1–23 are cleaved as a signal peptide; sequence MPGLKRILTVTILALWLPHPGNA. In terms of domain architecture, EGF-like 1; calcium-binding spans 42–82; that stretch reads DIDECRTIPEACRGDMMCVNQNGGYLCIPRTNPVYRGPYSN. Disulfide bonds link Cys46/Cys59, Cys53/Cys68, Cys131/Cys144, Cys138/Cys153, Cys155/Cys166, Cys172/Cys181, Cys177/Cys190, Cys192/Cys205, Cys211/Cys221, Cys217/Cys230, Cys232/Cys245, Cys251/Cys262, Cys258/Cys271, Cys273/Cys286, Cys292/Cys305, Cys299/Cys314, and Cys320/Cys332. The Cell attachment site motif lies at 54 to 56; it reads RGD. Residues 127–167 form the EGF-like 2; calcium-binding domain; it reads DVDECATDSHQCNPTQICINTEGGYTCSCTDGYWLLEGQCL. In terms of domain architecture, EGF-like 3; calcium-binding spans 168–206; it reads DIDECRYGYCQQLCANVPGSYSCTCNPGFTLNDDGRSCQ. The EGF-like 4; calcium-binding domain occupies 207–246; it reads DVNECETENPCVQTCVNTYGSFICRCDPGYELEEDGIHCS. The tract at residues 245–448 is interaction with LOXL1; that stretch reads CSDMDECSFS…LRIYVSQYPF (204 aa). The EGF-like 5; calcium-binding domain maps to 247 to 287; sequence DMDECSFSEFLCQHECVNQPGSYFCSCPPGYVLLEDNRSCQ. N-linked (GlcNAc...) asparagine glycosylation is found at Asn283 and Asn296. Positions 288–333 constitute an EGF-like 6; calcium-binding domain; that stretch reads DINECEHRNHTCTPLQTCYNLQGGFKCIDPIVCEEPYLLIGDNRCM.

This sequence belongs to the fibulin family. Homodimer. Monomer, homodimerizes in presence of Ca(2+). Interacts with ELN. Interacts (via N-terminus) with the integrins ITGAV/ITGB3, ITGAV/ITGB5 and ITGA9/ITGB1. Interacts with FBN1 (via N-terminal domain). Forms a ternary complex with ELN and FBN1. Interacts with EFEMP2 with moderate affinity. Interacts with LOXL1. In terms of processing, N-glycosylated.

The protein localises to the secreted. The protein resides in the extracellular space. Its subcellular location is the extracellular matrix. In terms of biological role, essential for elastic fiber formation, is involved in the assembly of continuous elastin (ELN) polymer and promotes the interaction of microfibrils and ELN. Stabilizes and organizes elastic fibers in the skin, lung and vasculature. Promotes adhesion of endothelial cells through interaction of integrins and the RGD motif. Vascular ligand for integrin receptors which may play a role in vascular development and remodeling. May act as an adapter that mediates the interaction between FBN1 and ELN. The polypeptide is Fibulin-5 (Fbln5) (Rattus norvegicus (Rat)).